The chain runs to 602 residues: Zinc finger MYND domain-containing protein 11 (602 aa).

In terms of domain architecture, SAMD1-like winged helix (WH) spans 6 to 82 (KRRQADTKAI…CKGSKAGIEQ (77 aa)). A PHD-type zinc finger spans residues 100–148 (DWYCFECHLPGEVLICDLCFRVYHSKCLSDEFRLRDSSSHWQCPVCRSI). Residues 149 to 255 (KKKHSNKQEM…KDTCHELDEL (107 aa)) enclose the Bromo domain. Zn(2+)-binding residues include Cys-258, Cys-261, Cys-277, and His-281. Positions 280-331 (NHELVWAKMKGFGFWPAKVMQKEDNQVDVRFFGHHHQRAWIPSENIQDITVN) constitute a PWWP domain. Residues 291–310 (FGFWPAKVMQKEDNQVDVRF) are aromatic cage required for H3.3K36me3-specific binding. A Glycyl lysine isopeptide (Lys-Gly) (interchain with G-Cter in SUMO2) cross-link involves residue Lys-366. Residues 366–461 (KNEDRGEEEA…HRSTQTTSDG (96 aa)) are disordered. Positions 394–400 (RAKKGRR) match the Nuclear localization signal motif. Glycyl lysine isopeptide (Lys-Gly) (interchain with G-Cter in SUMO2) cross-links involve residues Lys-407 and Lys-408. Ser-421 is modified (phosphoserine). The span at 435–461 (SVSTQTKKLSASSPRMLHRSTQTTSDG) shows a compositional bias: polar residues. 8 residues coordinate Zn(2+): Cys-563, Cys-566, Cys-574, Cys-575, Cys-581, Cys-585, His-594, and Cys-598. The segment at 563–598 (CYNCEEEAMYHCCWNTSYCSIKCQQEHWHAEHKRTC) adopts an MYND-type zinc-finger fold.

Homooligomer; forms homooligomers via its C-terminus. Interacts with histone H3.3 trimethylated at 'Lys-36' (H3.3K36me3). Interacts (via MYND-type zinc finger) with NCOR1. Interacts (via MYND-type zinc finger) with MGA protein (via PXLXP motif). Interacts (via MYND-type zinc finger) with EZH2. Interacts with EMSY and E2F6. Interacts with PIAS1 and UBE2I. Post-translationally, ubiquitinated, leading to proteasomal degradation. In terms of processing, sumoylated following its interaction with PIAS1 and UBE2I.

The protein resides in the nucleus. It is found in the chromosome. Chromatin reader that specifically recognizes and binds histone H3.3 trimethylated at 'Lys-36' (H3.3K36me3) and regulates RNA polymerase II elongation. Does not bind other histone H3 subtypes (H3.1 or H3.2). Colocalizes with highly expressed genes and functions as a transcription corepressor by modulating RNA polymerase II at the elongation stage. Binds non-specifically to dsDNA. Acts as a tumor-suppressor by repressing a transcriptional program essential for tumor cell growth. The polypeptide is Zinc finger MYND domain-containing protein 11 (Zmynd11) (Mus musculus (Mouse)).